Here is a 283-residue protein sequence, read N- to C-terminus: ATP phosphoribosyltransferase (283 aa).

This sequence belongs to the ATP phosphoribosyltransferase family. Long subfamily. The cofactor is Mg(2+).

The protein resides in the cytoplasm. It catalyses the reaction 1-(5-phospho-beta-D-ribosyl)-ATP + diphosphate = 5-phospho-alpha-D-ribose 1-diphosphate + ATP. It functions in the pathway amino-acid biosynthesis; L-histidine biosynthesis; L-histidine from 5-phospho-alpha-D-ribose 1-diphosphate: step 1/9. Feedback inhibited by histidine. In terms of biological role, catalyzes the condensation of ATP and 5-phosphoribose 1-diphosphate to form N'-(5'-phosphoribosyl)-ATP (PR-ATP). Has a crucial role in the pathway because the rate of histidine biosynthesis seems to be controlled primarily by regulation of HisG enzymatic activity. The sequence is that of ATP phosphoribosyltransferase from Methanopyrus kandleri (strain AV19 / DSM 6324 / JCM 9639 / NBRC 100938).